Here is a 231-residue protein sequence, read N- to C-terminus: Ribonuclease 3 (231 aa).

The RNase III domain maps to 8–135 (VGDLERRIGH…LMAALYQDGG (128 aa)). Position 48 (E48) interacts with Mg(2+). Catalysis depends on residues D52 and E124. A Mg(2+)-binding site is contributed by E124. Residues 161 to 230 (DPKTALQEWA…AKALLEREGA (70 aa)) enclose the DRBM domain. The disordered stretch occupies residues 210–231 (GKSRQEAEKAAAKALLEREGAG). A compositionally biased stretch (basic and acidic residues) spans 212–231 (SRQEAEKAAAKALLEREGAG).

Belongs to the ribonuclease III family. In terms of assembly, homodimer. The cofactor is Mg(2+).

Its subcellular location is the cytoplasm. It catalyses the reaction Endonucleolytic cleavage to 5'-phosphomonoester.. Functionally, digests double-stranded RNA. Involved in the processing of primary rRNA transcript to yield the immediate precursors to the large and small rRNAs (23S and 16S). Processes some mRNAs, and tRNAs when they are encoded in the rRNA operon. Processes pre-crRNA and tracrRNA of type II CRISPR loci if present in the organism. In Caulobacter vibrioides (strain ATCC 19089 / CIP 103742 / CB 15) (Caulobacter crescentus), this protein is Ribonuclease 3.